A 1029-amino-acid chain; its full sequence is Protein SUPPRESSOR OF PHYA-105 1 (1029 aa).

The segment at 42 to 69 (SETANSDCPGSSAHRNVDLTKPPPPEEA) is disordered. Residues 188–529 (VQMKTPVSSS…ARDILKSELI (342 aa)) form the Protein kinase domain. ATP is bound by residues 194–202 (VSSSNFSQL) and K216. The interval 213 to 269 (VVGKNQETPPEFVSDQDLGSKEKKLDISKSPTPHDVLPLKSSPKGNGMVSHGDGNHS) is disordered. The span at 230-239 (LGSKEKKLDI) shows a compositional bias: basic and acidic residues. D316 serves as the catalytic Proton acceptor. A disordered region spans residues 347–392 (EDLNRRRPVVEESSSGGRDSKKRKMDLHLNSPGNQLQATSTGRPFK). The segment covering 377–388 (SPGNQLQATSTG) has biased composition (polar residues). The stretch at 557-589 (VQKKKKASKLLQDIQTLEDDIKEAERRYSSNVS) forms a coiled coil. The disordered stretch occupies residues 653–679 (ARSDKTLKDRDRCSENQNENQDMSTKG). Basic and acidic residues predominate over residues 654 to 666 (RSDKTLKDRDRCS). The span at 667 to 679 (ENQNENQDMSTKG) shows a compositional bias: polar residues. WD repeat units follow at residues 714–753 (NSASVVCSLSFDPDEEHIAAAGISKKIKIFDFNAFMNESV), 763–803 (VNKS…GFSQ), 806–846 (EHQK…SLGT), 848–888 (WSPA…TPWC), 892–930 (GHEKAVSYVKFMDSETIVSASTDNSLKLWNLNKTNSSGL), 932–971 (PGACSLTYKGHTNQKNFVGLSVLDGYIACGSETNEVYSYY), and 997–1029 (DNGQFVSSVCWRKKSNMLVAANSTGNMKLLKLV). The short motif at 866–881 (LAFGSADYKVYCYDLR) is the DWD box element.

As to quaternary structure, interacts with CO, COP1, HFR1, HY5 and PHYA. Light induces dissociation of the SPA1/COP1 complex. Binds to CRY1 in response to blue light, this interaction prevents SPA1/COP1 complex formation but stimulate CRY2/COP1 complex, and thus avoid COP1-dependent degradation of the transcription factor HY5 by the proteasome and promotes hypocotyl elongation.

It localises to the nucleus speckle. Its subcellular location is the nucleus. The protein localises to the PML body. Its function is as follows. Controls normal photoperiodic flowering and regulates circadian rhythms. Required for suppression of photomorphogenesis in dark-grown seedlings and for normal elongation growth of adult plants. Integral component of the COP1/SPA E3 ubiquitin-protein ligase complex. Involved in HY5, HFR1, LAF1 and CO degradation. This Arabidopsis thaliana (Mouse-ear cress) protein is Protein SUPPRESSOR OF PHYA-105 1 (SPA1).